The sequence spans 406 residues: S-adenosylmethionine synthase (406 aa).

Histidine 16 is an ATP binding site. Aspartate 18 is a binding site for Mg(2+). K(+) is bound at residue glutamate 44. Positions 57 and 109 each coordinate L-methionine. Positions 109–119 (QSPQIAQGVDE) are flexible loop. Residues 174-176 (DAK), 249-250 (RF), aspartate 258, 264-265 (RK), alanine 281, and lysine 285 each bind ATP. Aspartate 258 is a binding site for L-methionine. L-methionine is bound at residue lysine 289.

Belongs to the AdoMet synthase family. As to quaternary structure, homotetramer; dimer of dimers. Mg(2+) is required as a cofactor. The cofactor is K(+).

It is found in the cytoplasm. It catalyses the reaction L-methionine + ATP + H2O = S-adenosyl-L-methionine + phosphate + diphosphate. It participates in amino-acid biosynthesis; S-adenosyl-L-methionine biosynthesis; S-adenosyl-L-methionine from L-methionine: step 1/1. Its function is as follows. Catalyzes the formation of S-adenosylmethionine (AdoMet) from methionine and ATP. The overall synthetic reaction is composed of two sequential steps, AdoMet formation and the subsequent tripolyphosphate hydrolysis which occurs prior to release of AdoMet from the enzyme. In Sphingopyxis alaskensis (strain DSM 13593 / LMG 18877 / RB2256) (Sphingomonas alaskensis), this protein is S-adenosylmethionine synthase.